A 95-amino-acid chain; its full sequence is Aspartyl/glutamyl-tRNA(Asn/Gln) amidotransferase subunit C (95 aa).

The protein belongs to the GatC family. Heterotrimer of A, B and C subunits.

It catalyses the reaction L-glutamyl-tRNA(Gln) + L-glutamine + ATP + H2O = L-glutaminyl-tRNA(Gln) + L-glutamate + ADP + phosphate + H(+). It carries out the reaction L-aspartyl-tRNA(Asn) + L-glutamine + ATP + H2O = L-asparaginyl-tRNA(Asn) + L-glutamate + ADP + phosphate + 2 H(+). Allows the formation of correctly charged Asn-tRNA(Asn) or Gln-tRNA(Gln) through the transamidation of misacylated Asp-tRNA(Asn) or Glu-tRNA(Gln) in organisms which lack either or both of asparaginyl-tRNA or glutaminyl-tRNA synthetases. The reaction takes place in the presence of glutamine and ATP through an activated phospho-Asp-tRNA(Asn) or phospho-Glu-tRNA(Gln). This Acidiphilium cryptum (strain JF-5) protein is Aspartyl/glutamyl-tRNA(Asn/Gln) amidotransferase subunit C.